The sequence spans 180 residues: Large ribosomal subunit protein uL6 (180 aa).

Belongs to the universal ribosomal protein uL6 family. In terms of assembly, part of the 50S ribosomal subunit.

In terms of biological role, this protein binds to the 23S rRNA, and is important in its secondary structure. It is located near the subunit interface in the base of the L7/L12 stalk, and near the tRNA binding site of the peptidyltransferase center. This Picosynechococcus sp. (strain ATCC 27264 / PCC 7002 / PR-6) (Agmenellum quadruplicatum) protein is Large ribosomal subunit protein uL6.